The following is a 92-amino-acid chain: UPF0335 protein BMEI0289 (92 aa).

It belongs to the UPF0335 family.

This chain is UPF0335 protein BMEI0289, found in Brucella melitensis biotype 1 (strain ATCC 23456 / CCUG 17765 / NCTC 10094 / 16M).